Here is a 386-residue protein sequence, read N- to C-terminus: MEDDAPVIYGLEFQARALTPQTAETDAIRFLVGTQSLKYDNQIHIIDFDDENNIINKNVLLHQAGEIWHISASPADKGVLATCYNKTSDSRVQACAAVWRMPKELESGSHESPEDPASTAQTLELLCHLDNGAQGNVACVVWEPMGDGKKVISLADSHILLWDLQPSSSQAVLASSAALEGRGQLKFTSGRWSPHHNCTQVATASDTTLRGWDTRSMSQIYCIENAHGQLVRDLDFNPNKQYYLASCGDDCKVKFWDTRNVTEPVKTLEEHSHWVWSVRYNHSHDQLVLTGSSDSRVILSNMVSISSEPFGHLVDDDDVSDPEEHHTEKSKEPLQDNVIATYEEHEDSVYAVDWASADPWLFASLSYDGRLVINRVPRALKYHILL.

Position 1 is an N-acetylmethionine (Met-1). 4 WD repeats span residues 132–172 (GAQG…SQAV), 182–222 (RGQL…QIYC), 226–266 (AHGQ…EPVK), and 270–310 (EHSH…SEPF). A disordered region spans residues 312–332 (HLVDDDDVSDPEEHHTEKSKE). Phosphoserine is present on Ser-320. A compositionally biased stretch (basic and acidic residues) spans 322–332 (PEEHHTEKSKE). A WD 5 repeat occupies 344 to 384 (EHEDSVYAVDWASADPWLFASLSYDGRLVINRVPRALKYHI).

It belongs to the WD repeat EIPR1 family. In terms of assembly, interacts with two multisubunit tethering complexes: EARP composed of VPS50, VPS51, VPS52 and VPS53 subunits and GARP complex composed of VPS51, VPS52, VPS53 and VPS54 subunits. Interacts with SNAP29. Ubiquitous. Highly expressed in brain, adipose tissue, spleen and kidney (at protein level).

It is found in the golgi apparatus. The protein localises to the trans-Golgi network. Its function is as follows. Acts as a component of endosomal retrieval machinery that is involved in protein transport from early endosomes to either recycling endosomes or the trans-Golgi network. Mediates the recruitment of Golgi-associated retrograde protein (GARP) complex to the trans-Golgi network and controls early endosome-to-Golgi transport of internalized protein. Promotes the recycling of internalized transferrin receptor (TFRC) to the plasma membrane through interaction with endosome-associated recycling protein (EARP) complex. Controls proper insulin distribution and secretion, and retention of cargo in mature dense core vesicles. Required for the stability of the endosome-associated retrograde protein (EARP) complex subunits and for proper localization and association of EARP with membranes. The polypeptide is EARP and GARP complex-interacting protein 1 (Rattus norvegicus (Rat)).